Here is a 984-residue protein sequence, read N- to C-terminus: Ubiquitin conjugation factor E4 ufd-2 (984 aa).

The U-box domain occupies 909 to 982 (DVPEEFKDPI…QEWICQKRNS (74 aa)).

Belongs to the ubiquitin conjugation factor E4 family. In terms of assembly, forms a complex composed of deubiquitinating enzyme atx-3, E4 ubiquitin-protein ligase ufd-2 and cdc-48.1; within the complex interacts with atx-3 and cdc-48.1 (via DDDLYN motif). Forms a complex composed of cdc-48.1, myosin chaperone unc-45, ubiquitin-protein ligases ufd-2 and chn-1; the complex targets myosin chaperone unc-45 for proteasomal degradation; within the complex interacts with cdc-48.1 (via DDDLYN motif), chn-1 and unc-45. Forms a complex composed of unc-45 and myosin heavy chain B unc-54; the complex targets unfolded unc-54 for proteasomal degradation; within the complex interacts with unc-45 (via TPR domain) and unc-54. Interacts with cdc-48.2 (via DDDLYN motif). As to expression, expressed in the germline (at protein level).

It is found in the cytoplasm. The protein localises to the nucleus membrane. Its subcellular location is the nucleus. The protein resides in the nucleolus. It catalyses the reaction S-ubiquitinyl-[E2 ubiquitin-conjugating enzyme]-L-cysteine + [acceptor protein]-L-lysine = [E2 ubiquitin-conjugating enzyme]-L-cysteine + N(6)-ubiquitinyl-[acceptor protein]-L-lysine.. The protein operates within protein modification; protein ubiquitination. Its function is as follows. Acts as an E4 ubiquitin ligase mediating the assembly of polyubiquitin chains on substrates ubiquitinated by another E3 ubiquitin ligase. The elongation of preexisting ubiquitin chains preferentially targets ubiquitin 'Lys-29' and 'Lys-48' residues. Also functions as an E3 ligase in conjunction with specific E1 and E2 ligases. Probably by regulating protein ubiquitination at DNA damage repair sites, coordinates DNA double-strand-break repair and apoptosis in the germline. Required for germline apoptosis in response to DNA damage downstream of cep-1. Involved in the resolution of DNA-repair sites by promoting the release of rad-51 from DNA damage foci. In association with protein-ligase chn-1, acts as an E3/E4 ligase to poly-ubiquitinate lysine residues in the UCS domain of myosin chaperone unc-45. By targeting myosin chaperone unc-45 for proteasomal degradation, regulates myosin assembly in body wall muscles in association with cdc-48.1 and chn-1. However, in a contrasting study, acts as an E3 ligase, independently of chn-1, to poly-ubiquitinate unc-45 without promoting unc-45 proteasomal degradation. Instead, uses unc-45 as an adapter protein to recruit and poly-ubiquitinate unfolded myosin heavy chain B unc-54. This chain is Ubiquitin conjugation factor E4 ufd-2, found in Caenorhabditis elegans.